A 453-amino-acid chain; its full sequence is Midnolin-A (453 aa).

The Ubiquitin-like domain occupies 20–94 (MNLNIQSTTG…LTLLPSVEAG (75 aa)). Disordered stretches follow at residues 184–219 (SHLA…TTSV), 232–256 (CAEQ…RSRK), 333–376 (RNAK…ENRA), and 390–429 (QKRL…EGSL). Over residues 206–219 (HCNGPHSSPLTTSV) the composition is skewed to polar residues. Low complexity-rich tracts occupy residues 239–252 (STRG…SPSS) and 338–351 (TSPQ…TTHP). Positions 365 to 376 (SGDRLRQTENRA) are enriched in basic and acidic residues. The span at 390–399 (QKRLRRKARR) shows a compositional bias: basic residues. The span at 415–428 (RTSSNSSTSSGEGS) shows a compositional bias: low complexity.

It localises to the nucleus. The protein resides in the cytoplasm. The protein localises to the cytosol. It is found in the nucleolus. In terms of biological role, facilitates ubiquitin-independent proteasomal degradation of polycomb protein CBX4. Plays a role in inhibiting the activity of glucokinase GCK and both glucose-induced and basal insulin secretion. In Xenopus laevis (African clawed frog), this protein is Midnolin-A (midn-a).